The primary structure comprises 156 residues: MIYYIVALVIILLDQWTKWLVVRHMEIGESIPLLDSVLYLTSHRNKGAAFGILEGQMWLFYIITSIVVIGIVYYMEKEAKHDRVFATALALILGGAIGNFIDRIFRGEVVDFVNTYIFTYNFPIFNVADSALCVGVGILFLKMIRDERKAKKEKNA.

2 consecutive transmembrane segments (helical) span residues 52–72 (ILEGQMWLFYIITSIVVIGIV) and 85–105 (FATALALILGGAIGNFIDRIF). Active-site residues include Asp111 and Asp129. A helical transmembrane segment spans residues 121-141 (NFPIFNVADSALCVGVGILFL).

The protein belongs to the peptidase A8 family.

Its subcellular location is the cell membrane. The enzyme catalyses Release of signal peptides from bacterial membrane prolipoproteins. Hydrolyzes -Xaa-Yaa-Zaa-|-(S,diacylglyceryl)Cys-, in which Xaa is hydrophobic (preferably Leu), and Yaa (Ala or Ser) and Zaa (Gly or Ala) have small, neutral side chains.. It functions in the pathway protein modification; lipoprotein biosynthesis (signal peptide cleavage). Functionally, this protein specifically catalyzes the removal of signal peptides from prolipoproteins. In Halalkalibacterium halodurans (strain ATCC BAA-125 / DSM 18197 / FERM 7344 / JCM 9153 / C-125) (Bacillus halodurans), this protein is Lipoprotein signal peptidase.